A 400-amino-acid chain; its full sequence is CCA-adding enzyme (400 aa).

2 residues coordinate ATP: glycine 8 and arginine 11. Residues glycine 8 and arginine 11 each coordinate CTP. Residues aspartate 21 and aspartate 23 each coordinate Mg(2+). ATP-binding residues include arginine 91, arginine 137, and arginine 140. CTP-binding residues include arginine 91, arginine 137, and arginine 140. An HD domain is found at 217-322; the sequence is NFQYAMTALK…IDLFNKWDVW (106 aa).

The protein belongs to the tRNA nucleotidyltransferase/poly(A) polymerase family. Bacterial CCA-adding enzyme type 2 subfamily. The cofactor is Mg(2+).

It carries out the reaction a tRNA precursor + 2 CTP + ATP = a tRNA with a 3' CCA end + 3 diphosphate. The catalysed reaction is a tRNA with a 3' CCA end + 2 CTP + ATP = a tRNA with a 3' CCACCA end + 3 diphosphate. Functionally, catalyzes the addition and repair of the essential 3'-terminal CCA sequence in tRNAs without using a nucleic acid template. Adds these three nucleotides in the order of C, C, and A to the tRNA nucleotide-73, using CTP and ATP as substrates and producing inorganic pyrophosphate. tRNA 3'-terminal CCA addition is required both for tRNA processing and repair. Also involved in tRNA surveillance by mediating tandem CCA addition to generate a CCACCA at the 3' terminus of unstable tRNAs. While stable tRNAs receive only 3'-terminal CCA, unstable tRNAs are marked with CCACCA and rapidly degraded. The sequence is that of CCA-adding enzyme from Actinobacillus succinogenes (strain ATCC 55618 / DSM 22257 / CCUG 43843 / 130Z).